Consider the following 608-residue polypeptide: Threonine--tRNA ligase (608 aa).

The editing domain stretch occupies residues 1–144; it reads MRILLIHSDY…SRTITAEEEE (144 aa). The interval 195-489 is catalytic; that stretch reads PHVKLMREKE…ELDEKAPMLP (295 aa). Positions 286, 338, and 459 each coordinate Zn(2+).

Belongs to the class-II aminoacyl-tRNA synthetase family. In terms of assembly, homodimer. It depends on Zn(2+) as a cofactor.

Its subcellular location is the cytoplasm. It carries out the reaction tRNA(Thr) + L-threonine + ATP = L-threonyl-tRNA(Thr) + AMP + diphosphate + H(+). Functionally, catalyzes the attachment of threonine to tRNA(Thr) in a two-step reaction: L-threonine is first activated by ATP to form Thr-AMP and then transferred to the acceptor end of tRNA(Thr). Also edits incorrectly charged L-seryl-tRNA(Thr). In Methanobrevibacter smithii (strain ATCC 35061 / DSM 861 / OCM 144 / PS), this protein is Threonine--tRNA ligase.